The primary structure comprises 331 residues: Adenosine deaminase (331 aa).

Zn(2+) is bound by residues His-12 and His-14. Substrate-binding residues include His-14, Asp-16, and Gly-170. Zn(2+) is bound at residue His-197. The active-site Proton donor is the Glu-200. Asp-278 is a binding site for Zn(2+). Asp-279 contacts substrate.

It belongs to the metallo-dependent hydrolases superfamily. Adenosine and AMP deaminases family. Adenosine deaminase subfamily. The cofactor is Zn(2+).

The catalysed reaction is adenosine + H2O + H(+) = inosine + NH4(+). The enzyme catalyses 2'-deoxyadenosine + H2O + H(+) = 2'-deoxyinosine + NH4(+). Its function is as follows. Catalyzes the hydrolytic deamination of adenosine and 2-deoxyadenosine. The polypeptide is Adenosine deaminase (Shewanella oneidensis (strain ATCC 700550 / JCM 31522 / CIP 106686 / LMG 19005 / NCIMB 14063 / MR-1)).